The chain runs to 591 residues: Homeobox domain-containing transcription factor HOB1 (591 aa).

The span at 1–15 (MEGKNEDMHTPRGPE) shows a compositional bias: basic and acidic residues. Disordered stretches follow at residues 1 to 37 (MEGK…DMLG) and 148 to 168 (IAGP…RSPA). Residues 176–223 (IAILRESYARNPNPDRKELERLAARTGRPWNKIREYFRQRRNKLRGLE) constitute a DNA-binding region (homeobox). Disordered regions lie at residues 420 to 463 (DAGL…PRES) and 543 to 563 (DAIE…ALTE). Residues 427-441 (QGEEDQPPTVEESDQ) show a composition bias toward acidic residues. Residues 543 to 560 (DAIERRNAGESKRKRDDA) show a composition bias toward basic and acidic residues.

It is found in the nucleus. Functionally, general stress-responsive transcription factor that governs multiple stress responses and adaptations. Plays a key role in virulence. Mediates the expression of LAC1, which is the major laccase involved in melanin synthesis. Positively regulates BZP4 induction under conditions of nutrient starvation and basal expression levels of MBS1 and USV101, 3 major transcription factors that independently contribute to melanin production. Also acts as a key regulator of ergosterol gene expression. The sequence is that of Homeobox domain-containing transcription factor HOB1 from Cryptococcus neoformans var. grubii serotype A (strain H99 / ATCC 208821 / CBS 10515 / FGSC 9487) (Filobasidiella neoformans var. grubii).